A 159-amino-acid polypeptide reads, in one-letter code: Ribosomal RNA large subunit methyltransferase H (159 aa).

S-adenosyl-L-methionine contacts are provided by residues leucine 76, glycine 107, and 126 to 131 (ISSLTL).

This sequence belongs to the RNA methyltransferase RlmH family. Homodimer.

The protein localises to the cytoplasm. It catalyses the reaction pseudouridine(1915) in 23S rRNA + S-adenosyl-L-methionine = N(3)-methylpseudouridine(1915) in 23S rRNA + S-adenosyl-L-homocysteine + H(+). In terms of biological role, specifically methylates the pseudouridine at position 1915 (m3Psi1915) in 23S rRNA. This chain is Ribosomal RNA large subunit methyltransferase H, found in Cupriavidus metallidurans (strain ATCC 43123 / DSM 2839 / NBRC 102507 / CH34) (Ralstonia metallidurans).